Consider the following 1509-residue polypeptide: MSKFLENLTPIDLNSDDRPKDIAALQLKVASPEKVLSWSYGEVKKPETINYRTLKPERDGLFCAKIFGPIRDYECLCGKYKKMRYKGVVCEKCGVEVTSSKVRRNRMGHIDLIAPVAHIWYVSSLPSRIGTLLGVKMKDLERVLYYEAYIVKTPGEASYDNEGLNPVQKYDVLNEEQYQQISSRFGDTGLDARMGGEIVQELLADLDLVDMFAQLKEDIQATKSEAKRKTIVKRLKVIEAFLHSGNRPEWMMLTQLPVLPPDLRPLVSLDGGKFAVSDVNDLYRRVINRNQRLKRLVELDAPEIIVRNEKRMLQEAVDALFDNGRRGNAVKGANKRPLKSLSEVIKGKQGRFRQNLLGKRVDFSGRSVIVVGPDLRMDQCGLPKKMAIELFKPHLMAKLEEKGYATTLKQAKKMIEQQVNEVWECLEEVVENYPVLLNRAPTLHKLSIQAFHPRLIEGKAIQLHPLVCSAFNADFDGDQMAVHVPLSDEAIAEAKVLMLASMNILLPASGKAIAVPSQDMILGLYYLTLEKNDVKGQHKLFANVEEVEIAFEQQALDLNARIRTVLDGRIATSTAGRLILKSIIPDYVPEKYWNKVLKKKDIGALVDYIYKIGGVSETAGFLDNLKDMGFKYATKVGVSISVDDIKIPEMKEGRVQTAKEQVKEIQRQYAAGLLTDQERYNKIIDIWTDANNSIAEALMDLIRKDKDGFNSVHMMADSGARGSAAQIRQLSGMRGLMAKSDGSIIETPITSNFREGLNVLEYFISTHGARKGLADTALKTANAGYLTRKLIDVAQNVKVSMTDCGTHEGVEVSDIVVGNEMIEPLADRIYGRVLAEDIIDPITSEVLVSEGTMIDEETATRVQEAGVRSVVMRAPSSCKAPKGICAKCYGLNMADNKMVKRGEAVGVIAAQSIGEPGTQLTLRTFHTGGTATAGKEERSVVATKEGFVRYYNLSVYRNTEGKLIVANRRNAGVLLVEPKIKAVNKGKVSIVVTHDEIVISVENNGDDEVRYNLRKSDVAKSNELAGVAGKIEGKLFLPLKDGDMVEEGDSIVEVIKEGWSIPSRIPFASELKVEDGAPVTQEVLSEAKGTVKFFLLKGDYLEAHDGVKSGDKVEEKGLFAVVVDDNNREAGRHYISRGSVVHVDNNAKVERGATLSAPEKTTQVVIAEWDPYSEPIIAEQKGTLKFEDIIPGVTVVEQFDEVTGDTRLELNEYIPAAYKPAITLATESGELIRYQLDPKTILFVKDGEEVNIADILAKTPKAAIKSKDITGGLPRVSELFEARRPKDIALIAQIDGVVSFGKPLRGKERLIISGDNGQITEQFIDKNKVALVHTGEYVHAGEKLTDGIVSSHDILAALGEKALYDYIVSEVQMVYRRQGVNISDKHIEIVTSQMMRQVKVVESGDSNFIAGDIISRRKFQEENQRVIALGGEPAIAEPMLVGITRAAVGADSIISAASFQDTTKVLTSASIAGTVDMLEDLKENVVIGRLIPVGTGMIDSDEIKFSAAE.

Residues cysteine 75, cysteine 77, cysteine 90, and cysteine 93 each contribute to the Zn(2+) site. Positions 474, 476, and 478 each coordinate Mg(2+). Positions 804, 878, 885, and 888 each coordinate Zn(2+).

The protein belongs to the RNA polymerase beta' chain family. The RNAP catalytic core consists of 2 alpha, 1 beta, 1 beta' and 1 omega subunit. When a sigma factor is associated with the core the holoenzyme is formed, which can initiate transcription. Mg(2+) serves as cofactor. The cofactor is Zn(2+).

It carries out the reaction RNA(n) + a ribonucleoside 5'-triphosphate = RNA(n+1) + diphosphate. Its function is as follows. DNA-dependent RNA polymerase catalyzes the transcription of DNA into RNA using the four ribonucleoside triphosphates as substrates. The polypeptide is DNA-directed RNA polymerase subunit beta' (Sulfurovum sp. (strain NBC37-1)).